The primary structure comprises 461 residues: ATP-dependent protease ATPase subunit HslU (461 aa).

ATP-binding positions include Ile18 and 60-65 (GVGKTE). The tract at residues 157 to 178 (EGSSVKPEPTAQQKESRQKMRK) is disordered. ATP is bound by residues Asp273, Glu339, and Arg411.

The protein belongs to the ClpX chaperone family. HslU subfamily. As to quaternary structure, a double ring-shaped homohexamer of HslV is capped on each side by a ring-shaped HslU homohexamer. The assembly of the HslU/HslV complex is dependent on binding of ATP.

It is found in the cytoplasm. Its function is as follows. ATPase subunit of a proteasome-like degradation complex; this subunit has chaperone activity. The binding of ATP and its subsequent hydrolysis by HslU are essential for unfolding of protein substrates subsequently hydrolyzed by HslV. HslU recognizes the N-terminal part of its protein substrates and unfolds these before they are guided to HslV for hydrolysis. The sequence is that of ATP-dependent protease ATPase subunit HslU from Magnetococcus marinus (strain ATCC BAA-1437 / JCM 17883 / MC-1).